Reading from the N-terminus, the 1595-residue chain is Collagen-like protein 2 (1595 aa).

N-linked (GlcNAc...) asparagine; by host glycans are attached at residues Asn87 and Asn134. Collagen-like domains lie at 97–155 (LRGE…NGDV), 175–233 (QVGL…KGEG), 236–295 (GSKG…KGDI), and 299–358 (GIKG…KGMK). The segment covering 181 to 190 (SQGDQGYKGD) has biased composition (low complexity). 2 disordered regions span residues 181–577 (SQGD…SPDL) and 604–1326 (TDIK…GIKG). Basic and acidic residues-rich tracts occupy residues 191 to 200 (QGSKGDKGQK), 209 to 448 (KGDK…KGTK), 456 to 466 (YKGDIGDKGIK), 474 to 501 (DKGDKGIKGDKGDKGIKGDDGSKGDKGY), 510 to 561 (DNGE…DKGE), 606 to 615 (IKGEKGDKGE), 622 to 702 (KGDK…DKGD), 718 to 825 (KGDK…DKGI), 832 to 883 (KGDK…KGFK), 895 to 1041 (KGDK…DKGI), 1048 to 1098 (KGNK…DQGT), 1107 to 1151 (KGDK…KGIK), 1159 to 1250 (NKGD…KGDQ), and 1265 to 1300 (KGDKGDKGDKGDKGDKGDKGAKGDKGDKGDKGDQGI). 3 N-linked (GlcNAc...) asparagine; by host glycosylation sites follow: Asn274, Asn280, and Asn286. Asn373, Asn382, Asn400, and Asn409 each carry an N-linked (GlcNAc...) asparagine; by host glycan. Collagen-like domains lie at 380-559 (GDNG…KGDK), 608-907 (GEKG…KGEN), 920-1039 (GDKG…KGDK), 1043-1102 (GTNG…KGET), and 1128-1307 (GDQG…SGAS). Residues Asn1345, Asn1420, and Asn1545 are each glycosylated (N-linked (GlcNAc...) asparagine; by host). The tract at residues 1538–1585 (SAFDKGGNGSIRFNPPSSGTKGSGGGGSVQGGGGTIPNDGYPGGNGGP) is disordered. Positions 1558-1585 (KGSGGGGSVQGGGGTIPNDGYPGGNGGP) are enriched in gly residues.

May be hydroxylated on lysine by the viral-encoded procollagen-lysine,2-oxoglutarate 5-dioxygenase.

The protein localises to the virion. May participate in the formation of a layer of cross-linked glycosylated fibrils at the viral surface thus giving it a hairy-like appearance. The sequence is that of Collagen-like protein 2 from Acanthamoeba polyphaga (Amoeba).